We begin with the raw amino-acid sequence, 744 residues long: MSPRARRCTDRCARMSERSMNATTETPTGKCPVAHGTGGTQNRDWWPNQLRVDLLNLHSPKSDPLGAAFDYRAEFKKLDYEALKNDLRKLMTDSQDWWPADFGNYGPQFVRMAWHSAGTYRLADGRGGGGRGQQRFAPLNSWPDNVNIDKSRRLLWPIKQKYGQKISWADLMILTGNVALETMGFRTFGFAGGREDTWEPDQDVFWGSETAWLSHRTLEKFDAPLGATEMGLIYVNPEGPDRNGDPISAAKFIRETFARMAMNDEETVALIGGGHTFGKTHGAAAESHKGPDPEAAALEAQGLGWASNYGTGHGADTIGSGLEVTWTQTPAQWSNFFFENLFKYEWVQTRSPAGAIQWEAKDGPDIIPDAHNPEKKHKPTMLTTDLSLRFDPIYEKISRRFLENPQAFAEAFARAWFKLTHRDLGPRSRYLGPEVPREVLLWQDPVPAVDHPLIDDADAAALKAKVLASGLTVSELVGTAWASASTFRGGDKRGGANGARIRLAPQKDWAVNQPEQIDKVLKALTRIQGEFNLNASDGKKVSLADVIVLAGNAGVEEAAKAAGHDVSVPFAPGRTDASQAETDADSFKWLEPAADGFRNYQKDGLAVPAEVALIDKAQLLTLTAPELTVLIGGLRAININVDGAKHGVFTDKPGALTTDFFTNLLDMSTQWKAAGESNDVYEGRDRQTGELKWTGTRVDLVFGSNSILRALAEVYAASDAKDKFVTDFVAAWTKVMNLDRFDLA.

Residues 1–22 (MSPRARRCTDRCARMSERSMNA) form the signal peptide. The segment at residues 114-234 (WHSAGTYRLA…LGATEMGLIY (121 aa)) is a cross-link (tryptophyl-tyrosyl-methioninium (Trp-Tyr) (with M-260)). The active-site Proton acceptor is the His115. The tryptophyl-tyrosyl-methioninium (Tyr-Met) (with W-114) cross-link spans 234-260 (YVNPEGPDRNGDPISAAKFIRETFARM). Residue His275 participates in heme b binding.

This sequence belongs to the peroxidase family. Peroxidase/catalase subfamily. As to quaternary structure, homodimer or homotetramer. Heme b serves as cofactor. Post-translationally, formation of the three residue Trp-Tyr-Met cross-link is important for the catalase, but not the peroxidase activity of the enzyme.

It carries out the reaction H2O2 + AH2 = A + 2 H2O. It catalyses the reaction 2 H2O2 = O2 + 2 H2O. Its function is as follows. Bifunctional enzyme with both catalase and broad-spectrum peroxidase activity. The sequence is that of Catalase-peroxidase from Azorhizobium caulinodans (strain ATCC 43989 / DSM 5975 / JCM 20966 / LMG 6465 / NBRC 14845 / NCIMB 13405 / ORS 571).